The primary structure comprises 32 residues: Hyaluronidase-Pk1a (32 aa).

An N-linked (GlcNAc...) asparagine glycan is attached at Asn-23.

It belongs to the glycosyl hydrolase 56 family. In terms of tissue distribution, expressed by the venom gland.

The protein localises to the secreted. The enzyme catalyses Random hydrolysis of (1-&gt;4)-linkages between N-acetyl-beta-D-glucosamine and D-glucuronate residues in hyaluronate.. Its function is as follows. Hydrolyzes high molecular weight hyaluronic acid to produce small oligosaccharides. This chain is Hyaluronidase-Pk1a, found in Phoneutria keyserlingi (Brazilian wandering spider).